Here is a 66-residue protein sequence, read N- to C-terminus: Large ribosomal subunit protein uL29 (66 aa).

This sequence belongs to the universal ribosomal protein uL29 family.

This is Large ribosomal subunit protein uL29 from Agrobacterium fabrum (strain C58 / ATCC 33970) (Agrobacterium tumefaciens (strain C58)).